The chain runs to 437 residues: F-box protein At3g62430 (437 aa).

In terms of domain architecture, F-box spans M1–S49.

This is F-box protein At3g62430 from Arabidopsis thaliana (Mouse-ear cress).